The chain runs to 505 residues: MEAKTFFLFMLFIFSQSWLSTSKRILNNPSVFSSSLNFSSGNAERLIKSFNLMPKYDVNVIPKGSLDAPRLIERQIDFLATAGSKNASVGPSVQEFGHYAGYYSLPHSKSAKMFYFFFESRNKTTDPVVIWLTGGPGCSSSVAMFYENGPFKISKDLSLYWNDFGWDKVSNIIYVDQPVGTGFSYTSDESDIRNDEDGVSNDLYDFLQAFFKEHPKFVKNDFFITGESYAGHYIPALASRVHSGNKKKEGIPINLKGFAIGNGLTNPEIQYGAYGDYALQMKLISESDHESLKQDYVECQNITKKCSLGGGLVCDSAVEVCTSIFNKIVAKKSGLNYYDIRKKCVGSLCYDFSRMEIFLNKENVRKALGVGDIKFVSCSSTVYDAMIEDWMQNLEVKIPSLVNDGINLLVYAGEYDLICNWLGNSRWVDQMNWSGQKGFGSAKNVSFLVDGKEAGLLKNHGPLTFLKVYNAGHMVPMDQPKASLQMLQNWMQGKLRTTPVLGFSQ.

Positions Met-1–Ser-22 are cleaved as a signal peptide. N-linked (GlcNAc...) asparagine glycans are attached at residues Asn-37, Asn-86, and Asn-122. 3 cysteine pairs are disulfide-bonded: Cys-138/Cys-378, Cys-306/Cys-321, and Cys-344/Cys-349. Residue Ser-228 is part of the active site. The N-linked (GlcNAc...) asparagine glycan is linked to Asn-301. Asp-416 is an active-site residue. Asn-432 and Asn-444 each carry an N-linked (GlcNAc...) asparagine glycan. The active site involves His-473.

It belongs to the peptidase S10 family. In terms of tissue distribution, expressed in roots, flowers and siliques.

The protein localises to the secreted. Functionally, probable carboxypeptidase. The protein is Serine carboxypeptidase-like 47 (SCPL47) of Arabidopsis thaliana (Mouse-ear cress).